Consider the following 265-residue polypeptide: Short-chain dehydrogenase/reductase GME11373 (265 aa).

Ile-26, Asp-72, Asn-99, and Arg-132 together coordinate NADP(+). Active-site proton donor residues include Ser-148 and Ser-149. NADP(+) contacts are provided by Tyr-163, Lys-167, and Thr-198. The Proton acceptor role is filled by Tyr-163. Catalysis depends on Lys-167, which acts as the Lowers pKa of active site Tyr.

It belongs to the short-chain dehydrogenases/reductases (SDR) family.

It participates in secondary metabolite biosynthesis. In terms of biological role, short-chain dehydrogenase/reductase; part of the gene cluster that mediates the biosynthesis of dibenzodioxocinones such as pestalotiollide B, a novel class of inhibitors against cholesterol ester transfer protein (CEPT). The biosynthesis initiates from condensation of acetate and malonate units catalyzed by the non-reducing PKS pks8/GME11356. Pks8/GME11356 lacks a thioesterase (TE) domain, which is important to the cyclizing of the third ring of atrochrysone carboxylic acid, and the esterase GME11355 might play the role of TE and catalyzes the cyclization reaction of the C ring. The lactamase-like protein GME11357 (or other beta-lactamases in Pestalotiopsis microspora) probably hydrolyzes the thioester bond between the ACP of pks8/GME11356 and the intermediate to release atrochrysone carboxylic acid, which is spontaneously dehydrates to form endocrocin anthrone. Endocrocin anthrone is further converted to emodin via the endocrocin intermediate. Emodin is then oxidized by several enzymes such as the Baeyer-Villiger oxidase GME11358, the oxidoreductase GME11367, the short chain dehydrogenase/reductase GME11373, as well as by other oxidoreductases from the cluster, to modify the A and C rings and open the B ring, and finally yield monodictyphenone. The prenyltransferase GME11375 may catalyze the addition reaction between the C5 side chains and the carbon bone of dibenzodioxocinones. The remaining biochemical reactions to the final product dibenzodioxocinones should be methylation catalyzed by methyltransferase GME11366 and reduction and lactonization reaction catalyzed by a series of oxidordeuctases. In Pestalotiopsis microspora, this protein is Short-chain dehydrogenase/reductase GME11373.